We begin with the raw amino-acid sequence, 695 residues long: WD repeat-containing protein 93 (695 aa).

The tract at residues 1–35 (MSSFKGNQAQKRRLSVFPKGPLEIPSPTEADWPKD) is disordered. Residues 421–460 (PCAAPIVMSQISSFSSYLALVCEDGVLILWDLAEGFLFGV) form a WD repeat.

Testis-specific. Expressed in spermatogonia, spermatocytes and spermatids.

The protein is WD repeat-containing protein 93 (Wdr93) of Mus musculus (Mouse).